Reading from the N-terminus, the 597-residue chain is tRNA uridine 5-carboxymethylaminomethyl modification enzyme MnmG (597 aa).

10–15 (GGGHAG) serves as a coordination point for FAD. Residue 267–281 (GPRYCPSIEDKVVRF) participates in NAD(+) binding.

Belongs to the MnmG family. Homodimer. Heterotetramer of two MnmE and two MnmG subunits. Requires FAD as cofactor.

It localises to the cytoplasm. Functionally, NAD-binding protein involved in the addition of a carboxymethylaminomethyl (cmnm) group at the wobble position (U34) of certain tRNAs, forming tRNA-cmnm(5)s(2)U34. This chain is tRNA uridine 5-carboxymethylaminomethyl modification enzyme MnmG, found in Thermus thermophilus (strain ATCC BAA-163 / DSM 7039 / HB27).